Here is a 266-residue protein sequence, read N- to C-terminus: MNKSRFISCVILIFALILVLFTPNVLAESQPDPTPDELHKSSEFTGTMGNMKYLYDDHYVSATKVMSVDKFLAHDLIYNISDKKLKNYDKVKTELLNEDLAKKYKDEVVDVYGSNYYVNCYFSSKDNVGKVTGGKTCMYGGITKHEGNHFDNGNLQNVLIRVYENKRNTISFEVQTDKKSVTAQELDIKARNFLINKKNLYEFNSSPYETGYIKFIENNGNTFWYDMMPAPGDKFDQSKYLMMYNDNKTVDSKSVKIEVHLTTKNG.

The first 27 residues, 1 to 27 (MNKSRFISCVILIFALILVLFTPNVLA), serve as a signal peptide directing secretion. Zn(2+)-binding residues include D36, H74, E98, E107, and D110. A disulfide bridge connects residues C120 and C137. Residues H145, E146, and H149 each coordinate Zn(2+).

Belongs to the staphylococcal/streptococcal toxin family. As to quaternary structure, interacts with host MHC class II molecules composed of alpha/HLA-DRA and beta/HLA-DRB1 chains. The cofactor is Zn(2+).

It localises to the secreted. Its function is as follows. Staphylococcal enterotoxin that activates the host immune system by binding as unprocessed molecules to major histocompatibility (MHC) complex class II and T-cell receptor (TCR) molecules. In turn, this ternary complex activates a large number of T-lymphocytes initiating a systemic release of pro-inflammatory cytokines. Also causes the intoxication staphylococcal food poisoning syndrome. In Staphylococcus aureus, this protein is Enterotoxin type C-2 (entC2).